The chain runs to 473 residues: GTPase Der (473 aa).

EngA-type G domains are found at residues 3–167 (FKVA…KGLE) and 203–378 (LRVA…TFWN). GTP is bound by residues 9 to 16 (GRPNVGKS), 56 to 60 (DTAGL), 119 to 122 (NKCE), 209 to 216 (GRPNVGKS), 256 to 260 (DTAGM), and 321 to 324 (NKWD). One can recognise a KH-like domain in the interval 379-463 (ARVPTARLNR…PIRLFMRKTH (85 aa)).

The protein belongs to the TRAFAC class TrmE-Era-EngA-EngB-Septin-like GTPase superfamily. EngA (Der) GTPase family. As to quaternary structure, associates with the 50S ribosomal subunit.

Functionally, GTPase that plays an essential role in the late steps of ribosome biogenesis. In Parvibaculum lavamentivorans (strain DS-1 / DSM 13023 / NCIMB 13966), this protein is GTPase Der.